A 156-amino-acid chain; its full sequence is Sensor histidine kinase component HK2 (156 aa).

The Extracellular portion of the chain corresponds to 1-42 (MALVLAAAGAVTVVQFRDAAHEADPDGALRGLTDDITADLVR). A helical transmembrane segment spans residues 43–63 (ELVTILPIVLVIAAVAAYLLS). The 57-residue stretch at 64–120 (RAALRPVDRIRAAAQTLTTTPHPDTDAPLPVPPTDDEIAWLATTLNTMLTRLQRALA) folds into the HAMP domain. The Cytoplasmic segment spans residues 64–156 (RAALRPVDRI…RCAGPDPPTS (93 aa)). The 29-residue stretch at 128 to 156 (DASHELRTPLALLTTELELRCAGPDPPTS) folds into the Histidine kinase; first part domain. At His131 the chain carries Phosphohistidine; by autocatalysis.

As to quaternary structure, homodimer. Each monomer interacts with HK1 and the receiver domain of TcrA. In terms of processing, phosphorylated by HK1.

Its subcellular location is the cell membrane. The catalysed reaction is ATP + protein L-histidine = ADP + protein N-phospho-L-histidine.. Functionally, member of the three-protein two-component system HK1/HK2/TcrA. HK2 transfers its phosphoryl group to TcrA. The polypeptide is Sensor histidine kinase component HK2 (Mycobacterium tuberculosis (strain ATCC 25618 / H37Rv)).